The sequence spans 366 residues: NADH-quinone oxidoreductase subunit D (366 aa).

The protein belongs to the complex I 49 kDa subunit family. NDH-1 is composed of 14 different subunits. Subunits NuoB, C, D, E, F, and G constitute the peripheral sector of the complex.

Its subcellular location is the cell membrane. The enzyme catalyses a quinone + NADH + 5 H(+)(in) = a quinol + NAD(+) + 4 H(+)(out). In terms of biological role, NDH-1 shuttles electrons from NADH, via FMN and iron-sulfur (Fe-S) centers, to quinones in the respiratory chain. The immediate electron acceptor for the enzyme in this species is believed to be a menaquinone. Couples the redox reaction to proton translocation (for every two electrons transferred, four hydrogen ions are translocated across the cytoplasmic membrane), and thus conserves the redox energy in a proton gradient. In Bacillus thuringiensis (strain Al Hakam), this protein is NADH-quinone oxidoreductase subunit D.